A 151-amino-acid chain; its full sequence is UPF0178 protein Ping_0754 (151 aa).

The protein belongs to the UPF0178 family.

The polypeptide is UPF0178 protein Ping_0754 (Psychromonas ingrahamii (strain DSM 17664 / CCUG 51855 / 37)).